Here is a 240-residue protein sequence, read N- to C-terminus: Proteasome subunit alpha (240 aa).

Belongs to the peptidase T1A family. As to quaternary structure, the 20S proteasome core is composed of 14 alpha and 14 beta subunits that assemble into four stacked heptameric rings, resulting in a barrel-shaped structure. The two inner rings, each composed of seven catalytic beta subunits, are sandwiched by two outer rings, each composed of seven alpha subunits. The catalytic chamber with the active sites is on the inside of the barrel. Has a gated structure, the ends of the cylinder being occluded by the N-termini of the alpha-subunits. Is capped at one or both ends by the proteasome regulatory ATPase, PAN.

Its subcellular location is the cytoplasm. Its activity is regulated as follows. The formation of the proteasomal ATPase PAN-20S proteasome complex, via the docking of the C-termini of PAN into the intersubunit pockets in the alpha-rings, triggers opening of the gate for substrate entry. Interconversion between the open-gate and close-gate conformations leads to a dynamic regulation of the 20S proteasome proteolysis activity. Functionally, component of the proteasome core, a large protease complex with broad specificity involved in protein degradation. The chain is Proteasome subunit alpha from Metallosphaera sedula (strain ATCC 51363 / DSM 5348 / JCM 9185 / NBRC 15509 / TH2).